The sequence spans 263 residues: MKIADLITWFESWANPAWCESWDNCGWQIEPGILHEEARVLVCLTPTLAVMEEAIALQANLIFAHHPLIFSPPKSLRRGEAIADMARLAFTKNIGIYSAHTNFDQVEDGTADVLAQILGLKDVAPIVPTQGGLGYGRVGLLDPFLNLQELLTVIQTRLAPPDLIFSPTADLQQIISRVAVLGGSGAGFISAVAETGAEAYLTSDCKFHQFQESRDRGLILIDAGHYATERPACDRLVEKLRSLNLHWVQLSNQDEDFRQFFVK.

His-65, His-66, Asp-104, His-225, and Glu-229 together coordinate a divalent metal cation.

The protein belongs to the GTP cyclohydrolase I type 2/NIF3 family. In terms of assembly, homohexamer.

In Nostoc sp. (strain PCC 7120 / SAG 25.82 / UTEX 2576), this protein is GTP cyclohydrolase 1 type 2 homolog.